The chain runs to 289 residues: Lipoyl synthase 2 (289 aa).

7 residues coordinate [4Fe-4S] cluster: C43, C48, C54, C69, C73, C76, and S282. Residues 55-271 (YAQKTATFLL…GAVARDLGFA (217 aa)) form the Radical SAM core domain.

The protein belongs to the radical SAM superfamily. Lipoyl synthase family. [4Fe-4S] cluster is required as a cofactor.

The protein localises to the cytoplasm. The enzyme catalyses [[Fe-S] cluster scaffold protein carrying a second [4Fe-4S](2+) cluster] + N(6)-octanoyl-L-lysyl-[protein] + 2 oxidized [2Fe-2S]-[ferredoxin] + 2 S-adenosyl-L-methionine + 4 H(+) = [[Fe-S] cluster scaffold protein] + N(6)-[(R)-dihydrolipoyl]-L-lysyl-[protein] + 4 Fe(3+) + 2 hydrogen sulfide + 2 5'-deoxyadenosine + 2 L-methionine + 2 reduced [2Fe-2S]-[ferredoxin]. It participates in protein modification; protein lipoylation via endogenous pathway; protein N(6)-(lipoyl)lysine from octanoyl-[acyl-carrier-protein]: step 2/2. In terms of biological role, catalyzes the radical-mediated insertion of two sulfur atoms into the C-6 and C-8 positions of the octanoyl moiety bound to the lipoyl domains of lipoate-dependent enzymes, thereby converting the octanoylated domains into lipoylated derivatives. The chain is Lipoyl synthase 2 from Gloeobacter violaceus (strain ATCC 29082 / PCC 7421).